Consider the following 115-residue polypeptide: Large ribosomal subunit protein bL20 (115 aa).

The protein belongs to the bacterial ribosomal protein bL20 family.

Binds directly to 23S ribosomal RNA and is necessary for the in vitro assembly process of the 50S ribosomal subunit. It is not involved in the protein synthesizing functions of that subunit. This Prochlorococcus marinus (strain SARG / CCMP1375 / SS120) protein is Large ribosomal subunit protein bL20.